A 145-amino-acid chain; its full sequence is Basic phospholipase A2 cPm05 (145 aa).

A signal peptide spans 1–21 (MYPAHLLVLLAVCISLLGASA). Positions 22–27 (IPPLPL) are excised as a propeptide. Disulfide bonds link cysteine 38/cysteine 98, cysteine 54/cysteine 144, cysteine 56/cysteine 72, cysteine 71/cysteine 125, cysteine 78/cysteine 118, cysteine 87/cysteine 111, and cysteine 105/cysteine 116. Ca(2+) contacts are provided by tyrosine 55, glycine 57, and glycine 59. Histidine 75 is an active-site residue. Aspartate 76 lines the Ca(2+) pocket. The active site involves aspartate 119.

Belongs to the phospholipase A2 family. Group I subfamily. D49 sub-subfamily. It depends on Ca(2+) as a cofactor. In terms of tissue distribution, expressed by the venom gland.

The protein localises to the secreted. It catalyses the reaction a 1,2-diacyl-sn-glycero-3-phosphocholine + H2O = a 1-acyl-sn-glycero-3-phosphocholine + a fatty acid + H(+). Its function is as follows. PLA2 catalyzes the calcium-dependent hydrolysis of the 2-acyl groups in 3-sn-phosphoglycerides. The chain is Basic phospholipase A2 cPm05 from Laticauda semifasciata (Black-banded sea krait).